The following is a 281-amino-acid chain: CLA biosynthesis isomerase (281 aa).

Belongs to the ADC family.

It localises to the cytoplasm. It catalyses the reaction 10-oxo-(12Z)-octadecenoate = 10-oxo-(11E)-octadecenoate. The protein operates within lipid metabolism; fatty acid metabolism. In terms of biological role, is involved in a saturation metabolic pathway of polyunsaturated fatty acids, that detoxifies unsaturated fatty acids and generates hydroxy fatty acids, oxo fatty acids, conjugated fatty acids such as conjugated linoleic acids (CLAs), and partially saturated trans-fatty acids as intermediates. CLA-DC catalyzes the migration of the carbon-carbon double bond in 10-oxo-(12Z)-octadecenoate to produce 10-oxo-(11E)-octadecenoate, during linoleate metabolism. As part of the gut microbiome, this enzyme modifies host fatty acid composition and is expected to improve human health by altering lipid metabolism related to the onset of metabolic syndrome. The chain is CLA biosynthesis isomerase from Lactiplantibacillus plantarum (Lactobacillus plantarum).